Consider the following 61-residue polypeptide: MARFRRSRSRSRSLYRRRRRSRRGGRQTRSRKLSRSRRRGRSRRRKGRRSRRSSRRSRRRN.

The segment at 1–61 is disordered; that stretch reads MARFRRSRSR…RSSRRSRRRN (61 aa).

It belongs to the protamine P1 family. In terms of tissue distribution, testis.

It localises to the nucleus. The protein localises to the chromosome. Protamines substitute for histones in the chromatin of sperm during the haploid phase of spermatogenesis. They compact sperm DNA into a highly condensed, stable and inactive complex. This Ornithorhynchus anatinus (Duckbill platypus) protein is Sperm protamine P1 (PRM1).